The primary structure comprises 544 residues: Probable protein kinase UbiB (544 aa).

A Protein kinase domain is found at 123-505 (EFDEQALASA…GRQKSHNVRS (383 aa)). ATP-binding positions include 129 to 137 (LASASIAQV) and K156. D291 (proton acceptor) is an active-site residue. A helical transmembrane segment spans residues 522 to 540 (LPLWLSCGTLVTVLLVLLL).

This sequence belongs to the ABC1 family. UbiB subfamily.

The protein localises to the cell inner membrane. Its pathway is cofactor biosynthesis; ubiquinone biosynthesis [regulation]. Its function is as follows. Is probably a protein kinase regulator of UbiI activity which is involved in aerobic coenzyme Q (ubiquinone) biosynthesis. The sequence is that of Probable protein kinase UbiB from Actinobacillus pleuropneumoniae serotype 7 (strain AP76).